A 566-amino-acid polypeptide reads, in one-letter code: NAD-dependent malic enzyme 3 (566 aa).

Residue Tyr105 is the Proton donor of the active site. Lys178 acts as the Proton acceptor in catalysis. The a divalent metal cation site is built by Glu249, Asp250, and Asp273. NAD(+) contacts are provided by residues 306–309 (AGTA), Asn423, and Asn468.

The protein belongs to the malic enzymes family. Requires Mg(2+) as cofactor. Mn(2+) serves as cofactor.

The enzyme catalyses (S)-malate + NAD(+) = pyruvate + CO2 + NADH. It catalyses the reaction oxaloacetate + H(+) = pyruvate + CO2. Its function is as follows. Catalyzes the decarboxylation of malate to pyruvate. Can use NAD and NADP, but with a strong preference for NAD. Can also catalyze the decarboxylation of oxaloacetate. Involved in keeping the ATP levels high. The sequence is that of NAD-dependent malic enzyme 3 (malS) from Bacillus subtilis (strain 168).